A 525-amino-acid polypeptide reads, in one-letter code: Lysine--tRNA ligase (525 aa).

2 residues coordinate Mg(2+): glutamate 419 and glutamate 426.

This sequence belongs to the class-II aminoacyl-tRNA synthetase family. In terms of assembly, homodimer. It depends on Mg(2+) as a cofactor.

The protein localises to the cytoplasm. It carries out the reaction tRNA(Lys) + L-lysine + ATP = L-lysyl-tRNA(Lys) + AMP + diphosphate. The protein is Lysine--tRNA ligase (lysS) of Deinococcus radiodurans (strain ATCC 13939 / DSM 20539 / JCM 16871 / CCUG 27074 / LMG 4051 / NBRC 15346 / NCIMB 9279 / VKM B-1422 / R1).